The following is a 75-amino-acid chain: Theromacin (75 aa).

Disulfide bonds link C2/C9, C24/C28, C31/C73, C39/C47, and C57/C59.

The protein belongs to the macin family.

The protein localises to the secreted. Has a bactericial activity. The sequence is that of Theromacin from Hirudo medicinalis (Medicinal leech).